Here is a 351-residue protein sequence, read N- to C-terminus: Flagellar P-ring protein (351 aa).

An N-terminal signal peptide occupies residues 1-20 (MKKILFLFTASLLLHVTLQA).

This sequence belongs to the FlgI family. In terms of assembly, the basal body constitutes a major portion of the flagellar organelle and consists of four rings (L,P,S, and M) mounted on a central rod.

Its subcellular location is the periplasm. It localises to the bacterial flagellum basal body. In terms of biological role, assembles around the rod to form the L-ring and probably protects the motor/basal body from shearing forces during rotation. In Sulfurimonas denitrificans (strain ATCC 33889 / DSM 1251) (Thiomicrospira denitrificans (strain ATCC 33889 / DSM 1251)), this protein is Flagellar P-ring protein.